A 318-amino-acid chain; its full sequence is Cytochrome f (318 aa).

The first 32 residues, 1-32, serve as a signal peptide directing secretion; sequence MQNKNNYNWLKEWVIRSFLLLTLLTWPSVSNA. Heme contacts are provided by Tyr33, Cys53, Cys56, and His57. The chain crosses the membrane as a helical span at residues 284–304; that stretch reads IQGLLLFFASVVLAQIFLVLK.

The protein belongs to the cytochrome f family. The 4 large subunits of the cytochrome b6-f complex are cytochrome b6, subunit IV (17 kDa polypeptide, petD), cytochrome f and the Rieske protein, while the 4 small subunits are PetG, PetL, PetM and PetN. The complex functions as a dimer. Heme serves as cofactor.

The protein resides in the plastid. It is found in the chloroplast thylakoid membrane. Component of the cytochrome b6-f complex, which mediates electron transfer between photosystem II (PSII) and photosystem I (PSI), cyclic electron flow around PSI, and state transitions. This chain is Cytochrome f, found in Angiopteris evecta (Mule's foot fern).